A 588-amino-acid polypeptide reads, in one-letter code: MSTETELQVAVKTSAKKDSRKKGQDRSEATLIKRFKGEGVRYKAKLIGIDEVSAARGDKLCQDSMMKLKGVVAGARSKGEHKQKIFLTISFGGIKIFDEKTGALQHHHAVHEISYIAKDITDHRAFGYVCGKEGNHRFVAIKTAQAAEPVILDLRDLFQLIYELKQREELEKKAQKDKQCEQAVYQTILEEDVEDPVYQYIVFEAGHEPIRDPETEENIYQVPTSQKKEGVYDVPKSQPNSQPLEDFESRFAAATPNRNLSMDFDELLEATKVSAVTQLELFGDMSTPPDITSPPTPATPGDAFLPSSSQTLPGSADVFGSMSFGTAAVPSGYVAMGAVLPSFWGQQPLVQQQIAMGAQPPVAQVIPGAQPIAWGQPGLFPATQQAWPTVAGQFPPAAFMPTQTVMPLAAAMFQGPLTPLATVPGTNDSARSSPQSDKPRQKMGKESFKDFQMVQPPPVPSRKPDQPSLTCTSEAFSSYFNKVGVAQDTDDCDDFDISQLNLTPVTSTTPSTNSPPTPAPRQSSPSKSSASHVSDPTADDIFEEGFESPSKSEEQEAPDGSQASSTSDPFGEPSGEPSGDNISPQDGS.

Residues 1–26 (MSTETELQVAVKTSAKKDSRKKGQDR) form a disordered region. A compositionally biased stretch (basic and acidic residues) spans 15–26 (AKKDSRKKGQDR). Residues 36 to 189 (KGEGVRYKAK…CEQAVYQTIL (154 aa)) form the PID domain. A phosphotyrosine mark is found at tyrosine 198, tyrosine 220, and tyrosine 232. Disordered regions lie at residues 224 to 243 (TSQK…NSQP), 420 to 444 (LATV…QKMG), 451 to 470 (FQMV…PSLT), and 502 to 588 (LTPV…QDGS). The segment covering 424–436 (PGTNDSARSSPQS) has biased composition (polar residues). 2 stretches are compositionally biased toward low complexity: residues 503–512 (TPVTSTTPST) and 523–534 (SSPSKSSASHVS). Position 524 is a phosphoserine; by CDK5 (serine 524). A compositionally biased stretch (acidic residues) spans 537–546 (TADDIFEEGF).

As to quaternary structure, associates with the SH2 domains of SRC, FYN and ABL. Interacts (phosphorylated on tyrosine residues) with CRK and CRKL (via respective SH2 domain). Interacts with SIAH1, LRP8 and VLDLR. Interacts with LRP1. Interacts with APLP1 (via NPXY motif). Interacts with DAB2IP. Interacts with ZSWIM8. In terms of processing, phosphorylated by FYN on Tyr-198 and Tyr-220 upon reelin induction in embryonic neurons. Also found phosphorylated on Tyr-232 upon reelin induction. Also phosphorylated on Ser-524 independently of reelin signaling. Ubiquitinated by various cullin-5-RING E3 ubiquitin-protein ligase complexes (ECS complexes) following ligand-binding and phosphorylation, leading to its degradation. Ubiquitinated by the ECS(SOCS7) complex in the cortical plate of the developing cerebral cortex following ligand-binding and phosphorylation by FYN, leading to its degradation by the proteasome. Recognized by ZSWIM8 through a disorder targets misorder mechanism that eliminates misfolded DAB1 via ubiquitination and proteasomal degradation. Expressed mainly in brain. Specifically expressin in cortical neurons.

Its subcellular location is the cytoplasm. Signaling adapter of the reelin-mediated signaling pathway, which regulates the migration and differentiation of postmitotic neurons during brain development. Mediates intracellular transduction of Reelin signaling following reelin (RELN)-binding to its receptor: acts by docking proteins through its phosphotyrosine residues and PID domain. The polypeptide is Disabled homolog 1 (Mus musculus (Mouse)).